A 140-amino-acid polypeptide reads, in one-letter code: ATP synthase epsilon chain (140 aa).

This sequence belongs to the ATPase epsilon chain family. As to quaternary structure, F-type ATPases have 2 components, CF(1) - the catalytic core - and CF(0) - the membrane proton channel. CF(1) has five subunits: alpha(3), beta(3), gamma(1), delta(1), epsilon(1). CF(0) has three main subunits: a, b and c.

It localises to the cell inner membrane. In terms of biological role, produces ATP from ADP in the presence of a proton gradient across the membrane. The sequence is that of ATP synthase epsilon chain from Chromobacterium violaceum (strain ATCC 12472 / DSM 30191 / JCM 1249 / CCUG 213 / NBRC 12614 / NCIMB 9131 / NCTC 9757 / MK).